The sequence spans 273 residues: Pre-mRNA-splicing factor CWC23 (273 aa).

Residues Asp15–Leu87 form the J domain.

It belongs to the DnaJ family. Associated with the spliceosome.

It is found in the cytoplasm. It localises to the nucleus. Its function is as follows. Involved in pre-mRNA splicing. May be involved in endoplasmic reticulum-associated protein degradation (ERAD) and required for growth at low and high temperatures. The protein is Pre-mRNA-splicing factor CWC23 (CWC23) of Eremothecium gossypii (strain ATCC 10895 / CBS 109.51 / FGSC 9923 / NRRL Y-1056) (Yeast).